Consider the following 633-residue polypeptide: 1-deoxy-D-xylulose-5-phosphate synthase (633 aa).

Residues histidine 74 and 115-117 contribute to the thiamine diphosphate site; that span reads GHA. Position 146 (aspartate 146) interacts with Mg(2+). Residues 147 to 148, asparagine 175, tyrosine 286, and glutamate 363 contribute to the thiamine diphosphate site; that span reads GA. Asparagine 175 is a Mg(2+) binding site.

It belongs to the transketolase family. DXPS subfamily. As to quaternary structure, homodimer. Mg(2+) serves as cofactor. It depends on thiamine diphosphate as a cofactor.

It carries out the reaction D-glyceraldehyde 3-phosphate + pyruvate + H(+) = 1-deoxy-D-xylulose 5-phosphate + CO2. It functions in the pathway metabolic intermediate biosynthesis; 1-deoxy-D-xylulose 5-phosphate biosynthesis; 1-deoxy-D-xylulose 5-phosphate from D-glyceraldehyde 3-phosphate and pyruvate: step 1/1. Its function is as follows. Catalyzes the acyloin condensation reaction between C atoms 2 and 3 of pyruvate and glyceraldehyde 3-phosphate to yield 1-deoxy-D-xylulose-5-phosphate (DXP). In Dehalococcoides mccartyi (strain ATCC BAA-2100 / JCM 16839 / KCTC 5957 / BAV1), this protein is 1-deoxy-D-xylulose-5-phosphate synthase.